The following is a 461-amino-acid chain: Fumarate hydratase class II (461 aa).

Substrate-binding positions include 97–99 (SGT), 127–130 (HPND), 137–139 (SSN), and threonine 185. Histidine 186 (proton donor/acceptor) is an active-site residue. Residue serine 316 is part of the active site. Substrate-binding positions include serine 317 and 322–324 (KVN).

It belongs to the class-II fumarase/aspartase family. Fumarase subfamily. As to quaternary structure, homotetramer.

It is found in the cytoplasm. It carries out the reaction (S)-malate = fumarate + H2O. The protein operates within carbohydrate metabolism; tricarboxylic acid cycle; (S)-malate from fumarate: step 1/1. In terms of biological role, involved in the TCA cycle. Catalyzes the stereospecific interconversion of fumarate to L-malate. In Staphylococcus saprophyticus subsp. saprophyticus (strain ATCC 15305 / DSM 20229 / NCIMB 8711 / NCTC 7292 / S-41), this protein is Fumarate hydratase class II.